The primary structure comprises 199 residues: Small ribosomal subunit protein uS4c (199 aa).

A compositionally biased stretch (basic and acidic residues) spans 1–24 (MESDQSKVESDQSKMESDQSKVES). Positions 1–35 (MESDQSKVESDQSKMESDQSKVESDQSISQSTSKK) are disordered. Residues 84–146 (MRLDNIIFRL…QKSQELIKRN (63 aa)) form the S4 RNA-binding domain.

It belongs to the universal ribosomal protein uS4 family. As to quaternary structure, part of the 30S ribosomal subunit. Contacts protein S5. The interaction surface between S4 and S5 is involved in control of translational fidelity.

Its subcellular location is the plastid. It localises to the chloroplast. One of the primary rRNA binding proteins, it binds directly to 16S rRNA where it nucleates assembly of the body of the 30S subunit. Functionally, with S5 and S12 plays an important role in translational accuracy. This chain is Small ribosomal subunit protein uS4c (rps4), found in Psilotum nudum (Whisk fern).